The primary structure comprises 300 residues: Protein XRI1 (300 aa).

In terms of assembly, interacts (via C-terminal domain) with MIP1.

The protein localises to the nucleus. Its function is as follows. Required for mitotic division of the generative cell nucleus and the development of mature tricellular pollen grains, and for male and female meiosis. In Arabidopsis thaliana (Mouse-ear cress), this protein is Protein XRI1 (XRI1).